A 272-amino-acid chain; its full sequence is D-aminoacyl-tRNA deacylase (272 aa).

It belongs to the DtdA deacylase family. As to quaternary structure, monomer. Requires Zn(2+) as cofactor.

The catalysed reaction is a D-aminoacyl-tRNA + H2O = a tRNA + a D-alpha-amino acid + H(+). It carries out the reaction glycyl-tRNA(Ala) + H2O = tRNA(Ala) + glycine + H(+). Functionally, D-aminoacyl-tRNA deacylase with broad substrate specificity. By recycling D-aminoacyl-tRNA to D-amino acids and free tRNA molecules, this enzyme counteracts the toxicity associated with the formation of D-aminoacyl-tRNA entities in vivo. In Thermococcus kodakarensis (strain ATCC BAA-918 / JCM 12380 / KOD1) (Pyrococcus kodakaraensis (strain KOD1)), this protein is D-aminoacyl-tRNA deacylase.